Reading from the N-terminus, the 77-residue chain is Conotoxin ArMSGL-0143 (77 aa).

The first 22 residues, 1 to 22, serve as a signal peptide directing secretion; the sequence is MSGLGIMLLTLLLLVFMETSHQ. Positions 23 to 44 are excised as a propeptide; that stretch reads DAGEKQATQRDAINVRRRRSLT. 3 disulfides stabilise this stretch: Cys51–Cys63, Cys55–Cys71, and Cys62–Cys75. Phe76 is subject to Phenylalanine amide.

It belongs to the conotoxin O3 superfamily. As to expression, expressed by the venom duct.

It localises to the secreted. The chain is Conotoxin ArMSGL-0143 from Conus arenatus (Sand-dusted cone).